The following is a 293-amino-acid chain: MNEEITLLAAAADPAATENIGWVQTIVLSIVQGLTEFLPISSSGHLRIISELFWGADAGASFTAVVQLGTEAAVLVFFAKEIWQIITGWFAGVFNKERRGFEYRMGWMIIVATIPVVILGVLGKDLIREALRNMWITASVLILFSLVFILAEKMGKKERDYDKLTMKDAIIMGLAQCLALIPGVSRSGGTISAGLFLGLKREVATKFSFLLAIPAVLGSGLYSLPDAFAPSSGQAASGLQLTVGTLFAFVVGYISIAWLMKFVANHSFSWFAAYRIPAGLLVMLLLALGMLNP.

The next 6 helical transmembrane spans lie at 74-94, 107-127, 134-154, 209-229, 243-263, and 271-291; these read VLVFFAKEIWQIITGWFAGVF, WMIIVATIPVVILGVLGKDLI, MWITASVLILFSLVFILAEKM, FLLAIPAVLGSGLYSLPDAFA, VGTLFAFVVGYISIAWLMKFV, and FAAYRIPAGLLVMLLLALGML.

Belongs to the UppP family.

It localises to the cell membrane. It carries out the reaction di-trans,octa-cis-undecaprenyl diphosphate + H2O = di-trans,octa-cis-undecaprenyl phosphate + phosphate + H(+). Its function is as follows. Catalyzes the dephosphorylation of undecaprenyl diphosphate (UPP). Confers resistance to bacitracin. The chain is Undecaprenyl-diphosphatase from Corynebacterium glutamicum (strain R).